We begin with the raw amino-acid sequence, 198 residues long: Ribose 1,5-bisphosphate phosphokinase PhnN (198 aa).

25-32 (GPSGAGKD) is an ATP binding site.

The protein belongs to the ribose 1,5-bisphosphokinase family.

The catalysed reaction is alpha-D-ribose 1,5-bisphosphate + ATP = 5-phospho-alpha-D-ribose 1-diphosphate + ADP. Its pathway is metabolic intermediate biosynthesis; 5-phospho-alpha-D-ribose 1-diphosphate biosynthesis; 5-phospho-alpha-D-ribose 1-diphosphate from D-ribose 5-phosphate (route II): step 3/3. Functionally, catalyzes the phosphorylation of ribose 1,5-bisphosphate to 5-phospho-D-ribosyl alpha-1-diphosphate (PRPP). The polypeptide is Ribose 1,5-bisphosphate phosphokinase PhnN (Bradyrhizobium diazoefficiens (strain JCM 10833 / BCRC 13528 / IAM 13628 / NBRC 14792 / USDA 110)).